A 619-amino-acid polypeptide reads, in one-letter code: DNA mismatch repair protein MutL (619 aa).

Belongs to the DNA mismatch repair MutL/HexB family.

Functionally, this protein is involved in the repair of mismatches in DNA. It is required for dam-dependent methyl-directed DNA mismatch repair. May act as a 'molecular matchmaker', a protein that promotes the formation of a stable complex between two or more DNA-binding proteins in an ATP-dependent manner without itself being part of a final effector complex. The polypeptide is DNA mismatch repair protein MutL (Xylella fastidiosa (strain 9a5c)).